Here is a 249-residue protein sequence, read N- to C-terminus: DNA repair protein RecO (249 aa).

The protein belongs to the RecO family.

Involved in DNA repair and RecF pathway recombination. The sequence is that of DNA repair protein RecO from Polaromonas sp. (strain JS666 / ATCC BAA-500).